Consider the following 124-residue polypeptide: Snaclec rhodocetin subunit delta (124 aa).

Cystine bridges form between cysteine 1–cysteine 12, cysteine 29–cysteine 120, and cysteine 95–cysteine 112. The region spanning 8-121 (YNGYCYRVFS…CEKTVSFVCK (114 aa)) is the C-type lectin domain.

This sequence belongs to the snaclec family. Heterotetramer of subunit alpha, beta, gamma and delta; only the gamma and the delta subunits are disulfide-linked. Alpha-beta heterodimer and gamma-delta heterodimer associate orthogonally, giving a cruciform conformation. This heterotetramer may covalently dimerizes thanks to the gamma subunit. As to expression, expressed by the venom gland.

The protein localises to the secreted. Its function is as follows. Potent inhibitor of collagen-induced platelet aggregation. It acts by binding to the integrin alpha2A domain and blocks collagen binding to integrin alpha-2/beta-1 (ITGA2/ITGB1). The gamma/delta subunits mainly contribute to this activity. The chain is Snaclec rhodocetin subunit delta from Calloselasma rhodostoma (Malayan pit viper).